Consider the following 402-residue polypeptide: Protein FAM221B (402 aa).

Basic and acidic residues predominate over residues 1-35 (MEAHEIIEEPHITMDAEKHPPSKDPSAEDLQENHI). Disordered stretches follow at residues 1-205 (MEAH…TARP) and 378-402 (DTQK…HRPL). Polar residues-rich tracts occupy residues 77 to 90 (EPSI…TPTY) and 393 to 402 (DTVSNWHRPL).

It belongs to the FAM221 family.

This chain is Protein FAM221B (FAM221B), found in Homo sapiens (Human).